Reading from the N-terminus, the 506-residue chain is Maturase K (506 aa).

It belongs to the intron maturase 2 family. MatK subfamily.

It is found in the plastid. Its subcellular location is the chloroplast. In terms of biological role, usually encoded in the trnK tRNA gene intron. Probably assists in splicing its own and other chloroplast group II introns. This chain is Maturase K, found in Arctostaphylos uva-ursi (Bearberry).